The chain runs to 117 residues: Mitochondrial zinc maintenance protein 1, mitochondrial (117 aa).

The N-terminal 10 residues, 1-10 (MSATLSAYRN), are a transit peptide targeting the mitochondrion. The tract at residues 91-117 (NESIKQGKKNLGSLAGKKGSSIRSCKD) is disordered.

This sequence belongs to the complex I LYR family. MZM1 subfamily. Interacts with RIP1.

Its subcellular location is the mitochondrion matrix. In terms of biological role, assembly factor required for Rieske Fe-S protein RIP1 incorporation into the cytochrome b-c1 (CIII) complex. Functions as a chaperone, binding to this subunit within the mitochondrial matrix and stabilizing it prior to its translocation and insertion into the late CIII dimeric intermediate within the mitochondrial inner membrane. Modulates the mitochondrial matrix zinc pool. The protein is Mitochondrial zinc maintenance protein 1, mitochondrial (MZM1) of Candida tropicalis (strain ATCC MYA-3404 / T1) (Yeast).